A 774-amino-acid chain; its full sequence is MEDPGETEAHPLGATSLNFVPGYQQEEKPSPDPLYDTPDARGVQAGGSQQPARTVSLRERLLITRPVWLQLRANAAAALHVLRTEPPGTFLVRKSNTRQCQTLCVRLPEASGPSFVSSHYLQESPGGISLEGSELTFPDLVQLICAYCHTRDILLLPLPLPRAIHQAATHKELEAISHLGMEFWSSSLNTKNQQRPSEAPQIPRLKARSPQELDQGTGAALCFFNPLFPGDLGPTKREKFKRSFKVRVSTETSSPLSPPAVPPPPVPVLPGTSSSQTERLPPRQLLQRESSVGYRVPGSASGPSLPPLPSLQEVDCCSPSSSEEEGSSGSPTTSPRLSRPRHRRPLLRSMSSAFCSLLAPERQVGRAATMLMQNRYTAVGQLVQDLLTQVRVGPESRELQGIRQALSRARAMLSAELGPEKLLPPERLELVLEKSLHRSVLKPLRPILAARLRRRLSTDGSLGRLAEGFRLARTQGPGAFGSHLNLSSPVEIEPVRQKLLQLLRAYSPSAQIKWLLQACKLLYTALKTQAGENAGADEFLPLLSLVLAQCDLPDLLLEAEYMSELLEPTLLTGEGGYYLTSLSASLALLSGLSQAHALPLSPAQELQRSLALWEQRRLPATHNFQHLLRVAYQDPSTGCTSKTLAVPPGSSIATLSQLCATKFRVTQPDAFGLFLYKDQGYHRLPPEALVHRLPTTGYLIYRRAERPETQRAATEKTKTGNERPERGAWEEEKGGLNGEGKSEIAVDQEGKDQARGGHMQLEEQKAEGCPALEE.

At methionine 1 the chain carries N-acetylmethionine. Residues 1 to 52 form a disordered region; sequence MEDPGETEAHPLGATSLNFVPGYQQEEKPSPDPLYDTPDARGVQAGGSQQPA. Residue serine 16 is modified to Phosphoserine. Residue tyrosine 35 is modified to Phosphotyrosine; by ABL1 and ABL2. Residues 68-162 form the SH2 domain; the sequence is WLQLRANAAA…ILLLPLPLPR (95 aa). Disordered stretches follow at residues 188–211 and 249–342; these read LNTK…RSPQ and STET…RPRH. A phosphoserine mark is found at serine 209, serine 257, serine 330, and serine 334. Pro residues predominate over residues 256–268; sequence LSPPAVPPPPVPV. Residues 327–337 show a composition bias toward low complexity; it reads SSGSPTTSPRL. Serine 351 is subject to Phosphoserine; by PKD/PRKD1. In terms of domain architecture, VPS9 spans 456–598; it reads LSTDGSLGRL…LSGLSQAHAL (143 aa). A Phosphoserine modification is found at serine 609. One can recognise a Ras-associating domain in the interval 624 to 706; the sequence is FQHLLRVAYQ…GYLIYRRAER (83 aa). Omega-N-methylarginine is present on arginine 692. Residues 704–766 are compositionally biased toward basic and acidic residues; it reads AERPETQRAA…GHMQLEEQKA (63 aa). A disordered region spans residues 704 to 774; it reads AERPETQRAA…KAEGCPALEE (71 aa).

It belongs to the RIN (Ras interaction/interference) family. Interacts with the GTP-bound form of Ras proteins (NRAS, HRAS and KRAS). This interaction prevents the association between RAF1 and Ras. Interacts with 14-3-3 proteins YWHAB, YWHAE and YWHAZ when phosphorylated on Ser-351. Interacts with the SH3 domain of ABL1 and ABL2. Interacts with RAB5A. The interaction with Ras is probably regulated and antagonized by the interaction with 14-3-3 proteins. The interaction with 14-3-3 proteins is regulated by phosphorylation on Ser-351. In terms of processing, phosphorylated on tyrosine residues by ABL1 and ABL2. Phosphorylation at Ser-351 by PRKD1 induces interaction with 14-3-3 proteins.

The protein resides in the cytoplasm. Its subcellular location is the membrane. It localises to the cytoskeleton. Its function is as follows. Ras effector protein, which may serve as an inhibitory modulator of neuronal plasticity in aversive memory formation. Can affect Ras signaling at different levels. First, by competing with RAF1 protein for binding to activated Ras. Second, by enhancing signaling from ABL1 and ABL2, which regulate cytoskeletal remodeling. Third, by activating RAB5A, possibly by functioning as a guanine nucleotide exchange factor (GEF) for RAB5A, by exchanging bound GDP for free GTP, and facilitating Ras-activated receptor endocytosis. The protein is Ras and Rab interactor 1 (Rin1) of Rattus norvegicus (Rat).